The chain runs to 155 residues: SsrA-binding protein (155 aa).

This sequence belongs to the SmpB family.

It localises to the cytoplasm. In terms of biological role, required for rescue of stalled ribosomes mediated by trans-translation. Binds to transfer-messenger RNA (tmRNA), required for stable association of tmRNA with ribosomes. tmRNA and SmpB together mimic tRNA shape, replacing the anticodon stem-loop with SmpB. tmRNA is encoded by the ssrA gene; the 2 termini fold to resemble tRNA(Ala) and it encodes a 'tag peptide', a short internal open reading frame. During trans-translation Ala-aminoacylated tmRNA acts like a tRNA, entering the A-site of stalled ribosomes, displacing the stalled mRNA. The ribosome then switches to translate the ORF on the tmRNA; the nascent peptide is terminated with the 'tag peptide' encoded by the tmRNA and targeted for degradation. The ribosome is freed to recommence translation, which seems to be the essential function of trans-translation. The protein is SsrA-binding protein of Chelativorans sp. (strain BNC1).